A 527-amino-acid polypeptide reads, in one-letter code: Abrin-b (527 aa).

Q1 bears the Pyrrolidone carboxylic acid mark. N110 carries N-linked (GlcNAc...) asparagine glycosylation. E163 is an active-site residue. 3 cysteine pairs are disulfide-bonded: C246/C268, C285/C304, and C328/C345. The Ricin B-type lectin 1 domain maps to 272–399 (YEPTVRIGGR…YLMRQGWRTG (128 aa)). Residues 282–324 (NGMCVDVYDDGYHNGNRIIAWKCKDRLEENQLWTLKSDKTIRS) form a 1-alpha repeat. The stretch at 325–365 (NGKCLTTEGYAPGNYVMIYDCTSAVAEATYWEIWDNGTIIN) is one 1-beta repeat. Residues N360 and N400 are each glycosylated (N-linked (GlcNAc...) asparagine). One copy of the 1-gamma repeat lies at 368–400 (SALVLSAESSSMGGTLTVQTNEYLMRQGWRTGN). The Ricin B-type lectin 2 domain maps to 402 to 526 (TSPFVTSISG…GKPNQIWLTL (125 aa)). One copy of the 2-alpha repeat lies at 413-448 (SDLCMQAQGSNVWLAYCDNNKKEQQWALYTDGSIRS). Cystine bridges form between C416-C429 and C455-C472. The 2-beta repeat unit spans residues 452 to 491 (TNNCLTSKDHKQGSPIVLMACSNGWASQRWLFRNDGSIYN). The stretch at 494-527 (DDMVMDVKRSDPSLKEIILHPYHGKPNQIWLTLF) is one 2-gamma repeat.

The protein in the N-terminal section; belongs to the ribosome-inactivating protein family. Type 2 RIP subfamily. In terms of assembly, disulfide-linked dimer of A and B chains.

The enzyme catalyses Endohydrolysis of the N-glycosidic bond at one specific adenosine on the 28S rRNA.. In terms of biological role, the A chain is responsible for inhibiting protein synthesis through the catalytic inactivation of 60S ribosomal subunits by removing adenine from position 4,324 of 28S rRNA. Abrin-a is more toxic than ricin. Functionally, the B chain is a galactose-specific lectin that facilitates the binding of abrin to the cell membrane that precedes endocytosis. In Abrus precatorius (Indian licorice), this protein is Abrin-b.